A 109-amino-acid polypeptide reads, in one-letter code: ATP synthase subunit c (109 aa).

2 helical membrane passes run 42-62 (YIGT…QGFS) and 88-108 (LALA…IIFV).

Belongs to the ATPase C chain family. As to quaternary structure, F-type ATPases have 2 components, F(1) - the catalytic core - and F(0) - the membrane proton channel. F(1) has five subunits: alpha(3), beta(3), gamma(1), delta(1), epsilon(1). F(0) has three main subunits: a(1), b(2) and c(10-14). The alpha and beta chains form an alternating ring which encloses part of the gamma chain. F(1) is attached to F(0) by a central stalk formed by the gamma and epsilon chains, while a peripheral stalk is formed by the delta and b chains.

Its subcellular location is the cell membrane. Its function is as follows. F(1)F(0) ATP synthase produces ATP from ADP in the presence of a proton or sodium gradient. F-type ATPases consist of two structural domains, F(1) containing the extramembraneous catalytic core and F(0) containing the membrane proton channel, linked together by a central stalk and a peripheral stalk. During catalysis, ATP synthesis in the catalytic domain of F(1) is coupled via a rotary mechanism of the central stalk subunits to proton translocation. Functionally, key component of the F(0) channel; it plays a direct role in translocation across the membrane. A homomeric c-ring of between 10-14 subunits forms the central stalk rotor element with the F(1) delta and epsilon subunits. This chain is ATP synthase subunit c, found in Ureaplasma urealyticum serovar 10 (strain ATCC 33699 / Western).